Here is a 205-residue protein sequence, read N- to C-terminus: Holliday junction branch migration complex subunit RuvA (205 aa).

The segment at methionine 1–isoleucine 64 is domain I. A domain II region spans residues threonine 65 to glutamate 143. The flexible linker stretch occupies residues arginine 144 to proline 156. The segment at valine 157–leucine 205 is domain III.

This sequence belongs to the RuvA family. Homotetramer. Forms an RuvA(8)-RuvB(12)-Holliday junction (HJ) complex. HJ DNA is sandwiched between 2 RuvA tetramers; dsDNA enters through RuvA and exits via RuvB. An RuvB hexamer assembles on each DNA strand where it exits the tetramer. Each RuvB hexamer is contacted by two RuvA subunits (via domain III) on 2 adjacent RuvB subunits; this complex drives branch migration. In the full resolvosome a probable DNA-RuvA(4)-RuvB(12)-RuvC(2) complex forms which resolves the HJ.

Its subcellular location is the cytoplasm. Its function is as follows. The RuvA-RuvB-RuvC complex processes Holliday junction (HJ) DNA during genetic recombination and DNA repair, while the RuvA-RuvB complex plays an important role in the rescue of blocked DNA replication forks via replication fork reversal (RFR). RuvA specifically binds to HJ cruciform DNA, conferring on it an open structure. The RuvB hexamer acts as an ATP-dependent pump, pulling dsDNA into and through the RuvAB complex. HJ branch migration allows RuvC to scan DNA until it finds its consensus sequence, where it cleaves and resolves the cruciform DNA. The protein is Holliday junction branch migration complex subunit RuvA of Shewanella loihica (strain ATCC BAA-1088 / PV-4).